The primary structure comprises 276 residues: Rhomboid protease GlpG (276 aa).

A run of 6 helical transmembrane segments spans residues 94–114 (GPVT…MQIL), 142–162 (ALMH…WYLG), 169–189 (LGSG…GYVQ), 192–212 (FSGP…GYVW), 229–249 (LIIF…GMSM), and 250–270 (ANGA…VDSL). S201 functions as the Nucleophile in the catalytic mechanism. H254 is a catalytic residue.

It belongs to the peptidase S54 family.

It is found in the cell inner membrane. It catalyses the reaction Cleaves type-1 transmembrane domains using a catalytic dyad composed of serine and histidine that are contributed by different transmembrane domains.. In terms of biological role, rhomboid-type serine protease that catalyzes intramembrane proteolysis. This Escherichia coli O81 (strain ED1a) protein is Rhomboid protease GlpG.